The chain runs to 857 residues: Aminopeptidase N (857 aa).

Residues Glu-130 and 264-268 contribute to the substrate site; that span reads GAMEN. Residue His-298 coordinates Zn(2+). Glu-299 (proton acceptor) is an active-site residue. Zn(2+) is bound by residues His-302 and Glu-321.

Belongs to the peptidase M1 family. In terms of assembly, monomer. Zn(2+) serves as cofactor. In terms of processing, the N-terminus is blocked.

The protein resides in the cytoplasm. It carries out the reaction Release of an N-terminal amino acid, Xaa-|-Yaa- from a peptide, amide or arylamide. Xaa is preferably Ala, but may be most amino acids including Pro (slow action). When a terminal hydrophobic residue is followed by a prolyl residue, the two may be released as an intact Xaa-Pro dipeptide.. In terms of biological role, aminopeptidase with broad substrate specificity to several peptides. Shows strong preference for leucine but also cleaves next to Arg and Lys in peptide-bond-containing substrates. This chain is Aminopeptidase N (pepN), found in Streptomyces lividans.